The primary structure comprises 483 residues: MFS-type transporter hepF (483 aa).

Residues 1-31 (METPAGKADRPRDHDSEQSQDNVVSWEGEDD) form a disordered region. Residues 7–17 (KADRPRDHDSE) are compositionally biased toward basic and acidic residues. Helical transmembrane passes span 89–109 (TIVV…AAPI), 124–144 (ILYT…MLIV), 147–167 (FFAG…VADL), 179–199 (FVTL…GFLT), 206–226 (WVFW…ILFT), 276–296 (PISL…YVLV), 311–331 (IGIS…GLWI), 357–377 (PMMI…GWSV), 385–405 (MPIV…MPMV), 416–436 (AASA…VLPL), and 448–468 (GWGN…LIAI).

This sequence belongs to the major facilitator superfamily.

The protein resides in the cell membrane. Functionally, MFS-type transporter; part of the gene cluster that mediates the biosynthesis of heptelidic acid (HA), a sesquiterpene lactone that acts as an inhibitor of glyceraldehyde-3-phosphatedehydrogenase (GAPDH) and a growth inhibitor of the salt-tolerant lactic acid bacteria in soy sauce brewing. Might be required for efficient secretion of heptelidic acid. The sequence is that of MFS-type transporter hepF (hepF) from Aspergillus oryzae (strain ATCC 42149 / RIB 40) (Yellow koji mold).